A 324-amino-acid polypeptide reads, in one-letter code: Uric acid degradation bifunctional protein TTL (324 aa).

Residue Ala-2 is modified to N-acetylalanine. A required for BRI1-binding region spans residues 2 to 29 (AMEIGEDEWKVCCGSSEFAKQMSTSGPL). The OHCU decarboxylase stretch occupies residues 2–161 (AMEIGEDEWK…LRMAKLFSDK (160 aa)). His-58 (proton donor; for OHCU decarboxylase activity) is an active-site residue. Residues His-58, Pro-59, Glu-80, Phe-111, Ile-113, and Ala-115 each coordinate (S)-allantoin. The tract at residues 178–324 (KPQDRLRIIG…PFSFSTYRGS (147 aa)) is HIU hydrolase. Residues 182–190 (RLRIIGGHL) carry the Internal peroxisomal targeting signal (PTS2) motif.

The protein in the N-terminal section; belongs to the OHCU decarboxylase family. This sequence in the C-terminal section; belongs to the transthyretin family. 5-hydroxyisourate hydrolase subfamily. Homodimer. Forms tetramers. Interacts with BRI1 in a kinase-dependent manner. Interacts with B1L. In terms of processing, phosphorylated by BRI1 in vitro. In terms of tissue distribution, expressed ubiquitously with highest levels in flowers buds and elongating inflorescences. As to expression, mainly expressed in stems and leaves, and, to a lower extent, in flowers, flower buds and seedlings. Strongly expressed in flower buds and leaves, to a lower extent in stems, and at low levels in seedlings and flowers.

Its subcellular location is the cell membrane. It is found in the peroxisome. The protein resides in the cytoplasm. The protein localises to the cytosol. It carries out the reaction 5-hydroxyisourate + H2O = 5-hydroxy-2-oxo-4-ureido-2,5-dihydro-1H-imidazole-5-carboxylate + H(+). It catalyses the reaction 5-hydroxy-2-oxo-4-ureido-2,5-dihydro-1H-imidazole-5-carboxylate + H(+) = (S)-allantoin + CO2. The protein operates within purine metabolism; urate degradation; (S)-allantoin from urate: step 2/3. It participates in purine metabolism; urate degradation; (S)-allantoin from urate: step 3/3. Its function is as follows. Involved in the last two steps of the degradation of uric acid, i.e. the hydrolysis of 5-hydroxyisourate (HIU) to 2-oxo-4-hydroxy-4-carboxy-5-ureidoimidazoline (OHCU) and its stereoselective decarboxylation to (S)-allantoin, a major ureide compound. Might function as a negative regulator to modulate brassinosteroid-mediated plant growth. Together with B1L, prevents plant growth and development, but by opposition to B1L, negatively regulates cold tolerance, probably in a brassinosteroid (BR) and allantoin-dependent manner. The protein is Uric acid degradation bifunctional protein TTL of Arabidopsis thaliana (Mouse-ear cress).